The following is a 113-amino-acid chain: Gas vesicle protein I2 (113 aa).

The interval 1-93 (MTPTNRHTHG…TVPEQPTHAT (93 aa)) is disordered. Positions 11–22 (QNAQHARRNAQQ) are enriched in low complexity. The span at 52–63 (EQPTSDTTNPAA) shows a compositional bias: polar residues. A compositionally biased stretch (low complexity) spans 69–81 (AQRTNAQNAARNA). The segment covering 82-93 (HSTVPEQPTHAT) has biased composition (polar residues).

The protein belongs to the gas vesicle GvpI family. In terms of assembly, gvpF to GvpM interact with each other in vitro, and may form multi-subunit complex(es). Interacts with GvpC and GvpO.

The protein resides in the gas vesicle. Its function is as follows. Proteins GvpF to GvpM might be involved in nucleating gas vesicle formation. A minor component of the gas vesicle. Gas vesicles are hollow, gas filled proteinaceous nanostructures found in several microbial planktonic microorganisms. They allow positioning of halobacteria at the optimal depth for growth in the poorly aerated, shallow brine pools of their habitat. In terms of biological role, expression of 2 c-vac DNA fragments containing 2 divergently transcribed regions (gvpE-gvpF-gvpG-gvpH-gvpI-gvpJ-gvpK-gvpL-gvpM and gvpA-gvpC-gvpN-gvpO) allows H.volcanii to produce gas vesicles. This Halobacterium salinarum (strain ATCC 700922 / JCM 11081 / NRC-1) (Halobacterium halobium) protein is Gas vesicle protein I2.